Consider the following 368-residue polypeptide: Phosphate acyltransferase (368 aa).

The tract at residues 334-368 is disordered; the sequence is AAPLGESGRDANGAGQASPSAGQPAEPSAALSSKT.

The protein belongs to the PlsX family. As to quaternary structure, homodimer. Probably interacts with PlsY.

Its subcellular location is the cytoplasm. It catalyses the reaction a fatty acyl-[ACP] + phosphate = an acyl phosphate + holo-[ACP]. Its pathway is lipid metabolism; phospholipid metabolism. Catalyzes the reversible formation of acyl-phosphate (acyl-PO(4)) from acyl-[acyl-carrier-protein] (acyl-ACP). This enzyme utilizes acyl-ACP as fatty acyl donor, but not acyl-CoA. This is Phosphate acyltransferase from Burkholderia pseudomallei (strain 1106a).